The chain runs to 189 residues: Elongation factor P (189 aa).

It belongs to the elongation factor P family.

Its subcellular location is the cytoplasm. It functions in the pathway protein biosynthesis; polypeptide chain elongation. Its function is as follows. Involved in peptide bond synthesis. Stimulates efficient translation and peptide-bond synthesis on native or reconstituted 70S ribosomes in vitro. Probably functions indirectly by altering the affinity of the ribosome for aminoacyl-tRNA, thus increasing their reactivity as acceptors for peptidyl transferase. This is Elongation factor P from Orientia tsutsugamushi (strain Boryong) (Rickettsia tsutsugamushi).